A 782-amino-acid chain; its full sequence is Acetazolamide conferring resistance protein zam (782 aa).

The region spanning 270-579 (EVALSLESQA…QRLLKLVLTE (310 aa)) is the RNB domain. One can recognise an S1 motif domain in the interval 655 to 736 (GEIFRGLITG…YRQQIDLGAV (82 aa)). The tract at residues 737-782 (NNAPKDSANMDFDDDDEDGDEREEQDTMDWDAMEDGDDDEGGAVIF) is disordered. Positions 747–782 (DFDDDDEDGDEREEQDTMDWDAMEDGDDDEGGAVIF) are enriched in acidic residues.

It belongs to the RNR ribonuclease family.

Its function is as follows. Not known; control resistance to the carbonic anhydrase inhibitor acetazolamide. This Synechocystis sp. (strain ATCC 27184 / PCC 6803 / Kazusa) protein is Acetazolamide conferring resistance protein zam (zam).